Consider the following 602-residue polypeptide: NADH-quinone oxidoreductase subunit C/D (602 aa).

The tract at residues 1–192 (MVNNMTDLTA…DPFELTKAKQ (192 aa)) is NADH dehydrogenase I subunit C. Positions 216–602 (DFMFLNLGPN…IDFVMSDVDR (387 aa)) are NADH dehydrogenase I subunit D.

In the N-terminal section; belongs to the complex I 30 kDa subunit family. This sequence in the C-terminal section; belongs to the complex I 49 kDa subunit family. As to quaternary structure, NDH-1 is composed of 13 different subunits. Subunits NuoB, CD, E, F, and G constitute the peripheral sector of the complex.

It is found in the cell inner membrane. The enzyme catalyses a quinone + NADH + 5 H(+)(in) = a quinol + NAD(+) + 4 H(+)(out). Its function is as follows. NDH-1 shuttles electrons from NADH, via FMN and iron-sulfur (Fe-S) centers, to quinones in the respiratory chain. The immediate electron acceptor for the enzyme in this species is believed to be ubiquinone. Couples the redox reaction to proton translocation (for every two electrons transferred, four hydrogen ions are translocated across the cytoplasmic membrane), and thus conserves the redox energy in a proton gradient. This Klebsiella pneumoniae (strain 342) protein is NADH-quinone oxidoreductase subunit C/D.